A 363-amino-acid chain; its full sequence is 3-dehydroquinate synthase (363 aa).

NAD(+) is bound by residues 72 to 77 (SGEKEK), 130 to 131 (TT), Lys142, and Lys151. Zn(2+) contacts are provided by Glu184, His247, and His264.

The protein belongs to the sugar phosphate cyclases superfamily. Dehydroquinate synthase family. Requires Co(2+) as cofactor. It depends on Zn(2+) as a cofactor. The cofactor is NAD(+).

The protein localises to the cytoplasm. It catalyses the reaction 7-phospho-2-dehydro-3-deoxy-D-arabino-heptonate = 3-dehydroquinate + phosphate. Its pathway is metabolic intermediate biosynthesis; chorismate biosynthesis; chorismate from D-erythrose 4-phosphate and phosphoenolpyruvate: step 2/7. Functionally, catalyzes the conversion of 3-deoxy-D-arabino-heptulosonate 7-phosphate (DAHP) to dehydroquinate (DHQ). This Bacillus anthracis (strain A0248) protein is 3-dehydroquinate synthase.